The primary structure comprises 124 residues: Large ribosomal subunit protein bL12 (124 aa).

It belongs to the bacterial ribosomal protein bL12 family. In terms of assembly, homodimer. Part of the ribosomal stalk of the 50S ribosomal subunit. Forms a multimeric L10(L12)X complex, where L10 forms an elongated spine to which 2 to 4 L12 dimers bind in a sequential fashion. Binds GTP-bound translation factors.

Forms part of the ribosomal stalk which helps the ribosome interact with GTP-bound translation factors. Is thus essential for accurate translation. This chain is Large ribosomal subunit protein bL12, found in Pelodictyon phaeoclathratiforme (strain DSM 5477 / BU-1).